Here is a 39-residue protein sequence, read N- to C-terminus: Photosystem II reaction center protein Y (39 aa).

A helical transmembrane segment spans residues 7–25 (VLVVLLPVLLAGGWALKNI).

Belongs to the PsbY family. As to quaternary structure, PSII is composed of 1 copy each of membrane proteins PsbA, PsbB, PsbC, PsbD, PsbE, PsbF, PsbH, PsbI, PsbJ, PsbK, PsbL, PsbM, PsbT, PsbX, PsbY, PsbZ, Psb30/Ycf12, peripheral proteins PsbO, CyanoQ (PsbQ), PsbU, PsbV and a large number of cofactors. It forms dimeric complexes.

It is found in the cellular thylakoid membrane. Loosely associated component of the core of photosystem II (PSII), it is not always seen in crystals. PSII is a light-driven water plastoquinone oxidoreductase, using light energy to abstract electrons from H(2)O, generating a proton gradient subsequently used for ATP formation. The sequence is that of Photosystem II reaction center protein Y from Cyanothece sp. (strain PCC 7425 / ATCC 29141).